A 103-amino-acid polypeptide reads, in one-letter code: Large ribosomal subunit protein bL21 (103 aa).

Belongs to the bacterial ribosomal protein bL21 family. As to quaternary structure, part of the 50S ribosomal subunit. Contacts protein L20.

In terms of biological role, this protein binds to 23S rRNA in the presence of protein L20. This is Large ribosomal subunit protein bL21 from Klebsiella pneumoniae (strain 342).